The sequence spans 177 residues: Crossover junction endodeoxyribonuclease RuvC (177 aa).

Residues aspartate 7, glutamate 68, and aspartate 141 contribute to the active site. Residues aspartate 7, glutamate 68, and aspartate 141 each contribute to the Mg(2+) site.

It belongs to the RuvC family. In terms of assembly, homodimer which binds Holliday junction (HJ) DNA. The HJ becomes 2-fold symmetrical on binding to RuvC with unstacked arms; it has a different conformation from HJ DNA in complex with RuvA. In the full resolvosome a probable DNA-RuvA(4)-RuvB(12)-RuvC(2) complex forms which resolves the HJ. It depends on Mg(2+) as a cofactor.

The protein resides in the cytoplasm. The catalysed reaction is Endonucleolytic cleavage at a junction such as a reciprocal single-stranded crossover between two homologous DNA duplexes (Holliday junction).. The RuvA-RuvB-RuvC complex processes Holliday junction (HJ) DNA during genetic recombination and DNA repair. Endonuclease that resolves HJ intermediates. Cleaves cruciform DNA by making single-stranded nicks across the HJ at symmetrical positions within the homologous arms, yielding a 5'-phosphate and a 3'-hydroxyl group; requires a central core of homology in the junction. The consensus cleavage sequence is 5'-(A/T)TT(C/G)-3'. Cleavage occurs on the 3'-side of the TT dinucleotide at the point of strand exchange. HJ branch migration catalyzed by RuvA-RuvB allows RuvC to scan DNA until it finds its consensus sequence, where it cleaves and resolves the cruciform DNA. The polypeptide is Crossover junction endodeoxyribonuclease RuvC (Nocardioides sp. (strain ATCC BAA-499 / JS614)).